We begin with the raw amino-acid sequence, 233 residues long: N-(5'-phosphoribosyl)anthranilate isomerase (233 aa).

Belongs to the TrpF family.

It carries out the reaction N-(5-phospho-beta-D-ribosyl)anthranilate = 1-(2-carboxyphenylamino)-1-deoxy-D-ribulose 5-phosphate. Its pathway is amino-acid biosynthesis; L-tryptophan biosynthesis; L-tryptophan from chorismate: step 3/5. This is N-(5'-phosphoribosyl)anthranilate isomerase from Ralstonia pickettii (strain 12J).